The sequence spans 1070 residues: Carbamoyl phosphate synthase large chain (1070 aa).

The interval 1–401 (MPKRDDIKTI…ALLKAVRSLE (401 aa)) is carboxyphosphate synthetic domain. Residues Arg-129, Arg-169, Gly-175, Gly-176, Lys-208, Ile-210, Glu-215, Gly-241, Ile-242, His-243, Gln-284, and Glu-298 each contribute to the ATP site. Positions 133–327 (RDLMNELGEP…IAKLAAKIAV (195 aa)) constitute an ATP-grasp 1 domain. 3 residues coordinate Mg(2+): Gln-284, Glu-298, and Asn-300. Mn(2+)-binding residues include Gln-284, Glu-298, and Asn-300. Residues 402–546 (IGADHLLLEE…YSTYEEENES (145 aa)) are oligomerization domain. The interval 547–929 (TRSAKESVIV…ALYKGFVASG (383 aa)) is carbamoyl phosphate synthetic domain. One can recognise an ATP-grasp 2 domain in the interval 671–861 (EKALEILQIP…MANVATRVIL (191 aa)). Residues Arg-707, Arg-746, Val-748, Glu-752, Gly-777, Val-778, His-779, Ser-780, Gln-820, and Glu-832 each coordinate ATP. Mg(2+) contacts are provided by Gln-820, Glu-832, and Asn-834. Gln-820, Glu-832, and Asn-834 together coordinate Mn(2+). The MGS-like domain occupies 930–1070 (TTMHDYGTVL…SEVKQPKARV (141 aa)). Positions 930 to 1070 (TTMHDYGTVL…SEVKQPKARV (141 aa)) are allosteric domain.

Belongs to the CarB family. Composed of two chains; the small (or glutamine) chain promotes the hydrolysis of glutamine to ammonia, which is used by the large (or ammonia) chain to synthesize carbamoyl phosphate. Tetramer of heterodimers (alpha,beta)4. It depends on Mg(2+) as a cofactor. Mn(2+) serves as cofactor.

The catalysed reaction is hydrogencarbonate + L-glutamine + 2 ATP + H2O = carbamoyl phosphate + L-glutamate + 2 ADP + phosphate + 2 H(+). It carries out the reaction hydrogencarbonate + NH4(+) + 2 ATP = carbamoyl phosphate + 2 ADP + phosphate + 2 H(+). The protein operates within amino-acid biosynthesis; L-arginine biosynthesis; carbamoyl phosphate from bicarbonate: step 1/1. It functions in the pathway pyrimidine metabolism; UMP biosynthesis via de novo pathway; (S)-dihydroorotate from bicarbonate: step 1/3. In terms of biological role, large subunit of the glutamine-dependent carbamoyl phosphate synthetase (CPSase). CPSase catalyzes the formation of carbamoyl phosphate from the ammonia moiety of glutamine, carbonate, and phosphate donated by ATP, constituting the first step of 2 biosynthetic pathways, one leading to arginine and/or urea and the other to pyrimidine nucleotides. The large subunit (synthetase) binds the substrates ammonia (free or transferred from glutamine from the small subunit), hydrogencarbonate and ATP and carries out an ATP-coupled ligase reaction, activating hydrogencarbonate by forming carboxy phosphate which reacts with ammonia to form carbamoyl phosphate. The polypeptide is Carbamoyl phosphate synthase large chain (Listeria monocytogenes serotype 4a (strain HCC23)).